A 343-amino-acid chain; its full sequence is E3 ubiquitin-protein ligase SP1 (343 aa).

Residues 1–21 traverse the membrane as a helical segment; the sequence is MIPWGGVTCCLSAAALYLLGR. The Chloroplast intermembrane segment spans residues 22–222; the sequence is SSGRDAEVLE…LISNLGKWSR (201 aa). Residues 223–244 form a helical membrane-spanning segment; it reads LYKYASMGFTVLGVFLITKHVI. The Cytoplasmic portion of the chain corresponds to 245–343; sequence DSVLERRRRR…IDLAVKTYRH (99 aa). The RING-type zinc-finger motif lies at 296–331; sequence CVICLEQEYNAVFVPCGHMCCCTACSSHLTSCPLCR.

As to quaternary structure, interacts with TOC33, TOC75-3 and TOC159. Post-translationally, auto-ubiquitinated.

The protein resides in the plastid. Its subcellular location is the chloroplast outer membrane. It catalyses the reaction S-ubiquitinyl-[E2 ubiquitin-conjugating enzyme]-L-cysteine + [acceptor protein]-L-lysine = [E2 ubiquitin-conjugating enzyme]-L-cysteine + N(6)-ubiquitinyl-[acceptor protein]-L-lysine.. It functions in the pathway protein modification; protein ubiquitination. Its function is as follows. E3 ubiquitin-protein ligase involved in the regulation of protein import in the chloroplast. Associates with TOC complexes and mediates ubiquitination of TOC components, promoting their degradation via the ubiquitin-proteasome system (UPS). Plays a role in the reorganization of the TOC machinery. Involved in a mechanism that regulates plastid biogenesis via UPS. Promotes stress tolerance by depleting the chloroplast protein import apparatus, which limits photosystem assembly and the potential for reactive oxygen species (ROS) formation. May act as negative regulator of programmed cell death (PCD) during biotic stress. This Arabidopsis thaliana (Mouse-ear cress) protein is E3 ubiquitin-protein ligase SP1.